Consider the following 169-residue polypeptide: N-alpha-acetyltransferase 50 (169 aa).

One can recognise an N-acetyltransferase domain in the interval 5 to 154 (IELGDVTPHN…DAHVLQKNLK (150 aa)). Residue Tyr-30 participates in substrate binding. The active site involves Tyr-72. Met-74 contributes to the substrate binding site. 76 to 89 (LGCLAPYRRLGIGT) contacts acetyl-CoA. CoA is bound at residue 78 to 89 (CLAPYRRLGIGT). Residue His-111 is part of the active site. A CoA-binding site is contributed by 116 to 125 (NESAIDFYRK). The tract at residues 137 to 140 (YYKR) is substrate.

The protein belongs to the acetyltransferase family. GNAT subfamily.

It is found in the cytoplasm. Its subcellular location is the nucleus. It carries out the reaction N-terminal L-methionyl-L-alanyl-[protein] + acetyl-CoA = N-terminal N(alpha)-acetyl-L-methionyl-L-alanyl-[protein] + CoA + H(+). The enzyme catalyses N-terminal L-methionyl-L-seryl-[protein] + acetyl-CoA = N-terminal N(alpha)-acetyl-L-methionyl-L-seryl-[protein] + CoA + H(+). The catalysed reaction is N-terminal L-methionyl-L-valyl-[protein] + acetyl-CoA = N-terminal N(alpha)-acetyl-L-methionyl-L-valyl-[protein] + CoA + H(+). It catalyses the reaction N-terminal L-methionyl-L-threonyl-[protein] + acetyl-CoA = N-terminal N(alpha)-acetyl-L-methionyl-L-threonyl-[protein] + CoA + H(+). It carries out the reaction N-terminal L-methionyl-L-lysyl-[protein] + acetyl-CoA = N-terminal N(alpha)-acetyl-L-methionyl-L-lysyl-[protein] + CoA + H(+). The enzyme catalyses N-terminal L-methionyl-L-leucyl-[protein] + acetyl-CoA = N-terminal N(alpha)-acetyl-L-methionyl-L-leucyl-[protein] + CoA + H(+). The catalysed reaction is N-terminal L-methionyl-L-phenylalanyl-[protein] + acetyl-CoA = N-terminal N(alpha)-acetyl-L-methionyl-L-phenylalanyl-[protein] + CoA + H(+). It catalyses the reaction N-terminal L-methionyl-L-tyrosyl-[protein] + acetyl-CoA = N-terminal N(alpha)-acetyl-L-methionyl-L-tyrosyl-[protein] + CoA + H(+). In terms of biological role, N-alpha-acetyltransferase that acetylates the N-terminus of proteins that retain their initiating methionine. Has a broad substrate specificity: able to acetylate the initiator methionine of most peptides, except for those with a proline in second position. Also displays N-epsilon-acetyltransferase activity by mediating acetylation of the side chain of specific lysines on proteins. The relevance of N-epsilon-acetyltransferase activity is however unclear. Required for sister chromatid cohesion during mitosis by promoting binding of CDCA5/sororin to cohesin. The chain is N-alpha-acetyltransferase 50 (naa50) from Xenopus tropicalis (Western clawed frog).